Consider the following 200-residue polypeptide: QPSISDQQVSALPYSDQIQQPLTNQVMPDIVMLQRRWMDRYEIDSLIGKVEQEWVAIKAFLNQAQIEVRHDTEMKYYIVHLKIVDFGSSCQLGQRIVEVLGIPPAHILDQAPKFFEKLPDGTWSLKKLHNILGVETGGPGGRFKDLILRMLDYDPKIQPYYALQHSFFKQETGIAGHPTYQFSANTGPAHYMTEGHLAMR.

Tyrosine 41 is subject to Phosphotyrosine; by autocatalysis. Lysine 58 is a binding site for ATP. Tyrosine 76 bears the Phosphotyrosine; by autocatalysis mark. Serine 88 bears the Phosphoserine; by autocatalysis mark. Phosphothreonine; by autocatalysis is present on threonine 122.

This sequence belongs to the protein kinase superfamily. CMGC Ser/Thr protein kinase family. MNB/DYRK subfamily. As to quaternary structure, interacts with RAD54L2/ARIP4. Interacts with CRY2. Interacts with RANBP9. Interacts with WDR68. Interacts with SIRT1. Can also autophosphorylate on serine and threonine residues (in vitro). Autophosphorylated on numerous tyrosine residues.

Its subcellular location is the nucleus. The catalysed reaction is L-tyrosyl-[protein] + ATP = O-phospho-L-tyrosyl-[protein] + ADP + H(+). The enzyme catalyses L-seryl-[protein] + ATP = O-phospho-L-seryl-[protein] + ADP + H(+). It carries out the reaction L-threonyl-[protein] + ATP = O-phospho-L-threonyl-[protein] + ADP + H(+). It catalyses the reaction [DNA-directed RNA polymerase] + ATP = phospho-[DNA-directed RNA polymerase] + ADP + H(+). Its activity is regulated as follows. Inhibited by RANBP9. In terms of biological role, dual-specificity kinase which possesses both serine/threonine and tyrosine kinase activities. Exhibits a substrate preference for proline at position P+1 and arginine at position P-3. Plays an important role in double-strand breaks (DSBs) repair following DNA damage. Mechanistically, phosphorylates RNF169 and increases its ability to block accumulation of TP53BP1 at the DSB sites thereby promoting homologous recombination repair (HRR). Also acts as a positive regulator of transcription by acting as a CTD kinase that mediates phosphorylation of the CTD (C-terminal domain) of the large subunit of RNA polymerase II (RNAP II) POLR2A. May play a role in a signaling pathway regulating nuclear functions of cell proliferation. Modulates alternative splicing by phosphorylating the splice factor SRSF6. Has pro-survival function and negatively regulates the apoptotic process. Promotes cell survival upon genotoxic stress through phosphorylation of SIRT1. This in turn inhibits p53/TP53 activity and apoptosis. Phosphorylates SEPTIN4, SEPTIN5 and SF3B1 at 'Thr-434'. In Oryctolagus cuniculus (Rabbit), this protein is Dual specificity tyrosine-phosphorylation-regulated kinase 1A.